Consider the following 129-residue polypeptide: Small ribosomal subunit protein uS11 (129 aa).

It belongs to the universal ribosomal protein uS11 family. As to quaternary structure, part of the 30S ribosomal subunit. Interacts with proteins S7 and S18. Binds to IF-3.

Its function is as follows. Located on the platform of the 30S subunit, it bridges several disparate RNA helices of the 16S rRNA. Forms part of the Shine-Dalgarno cleft in the 70S ribosome. The sequence is that of Small ribosomal subunit protein uS11 from Maricaulis maris (strain MCS10) (Caulobacter maris).